Here is a 275-residue protein sequence, read N- to C-terminus: Formamidopyrimidine-DNA glycosylase (275 aa).

Pro-2 (schiff-base intermediate with DNA) is an active-site residue. The active-site Proton donor is the Glu-3. Catalysis depends on Lys-58, which acts as the Proton donor; for beta-elimination activity. DNA-binding residues include His-89, Arg-108, and Lys-151. An FPG-type; degenerate zinc finger spans residues 236–275 (KVYDRAGQPCERCPGPAACAGISRTVQSGRATYFCARTQK). The active-site Proton donor; for delta-elimination activity is the Arg-265.

It belongs to the FPG family. In terms of assembly, monomer. Requires Zn(2+) as cofactor.

It catalyses the reaction Hydrolysis of DNA containing ring-opened 7-methylguanine residues, releasing 2,6-diamino-4-hydroxy-5-(N-methyl)formamidopyrimidine.. The enzyme catalyses 2'-deoxyribonucleotide-(2'-deoxyribose 5'-phosphate)-2'-deoxyribonucleotide-DNA = a 3'-end 2'-deoxyribonucleotide-(2,3-dehydro-2,3-deoxyribose 5'-phosphate)-DNA + a 5'-end 5'-phospho-2'-deoxyribonucleoside-DNA + H(+). Involved in base excision repair of DNA damaged by oxidation or by mutagenic agents. Acts as a DNA glycosylase that recognizes and removes damaged bases. Has a preference for oxidized purines, such as 7,8-dihydro-8-oxoguanine (8-oxoG). Has AP (apurinic/apyrimidinic) lyase activity and introduces nicks in the DNA strand. Cleaves the DNA backbone by beta-delta elimination to generate a single-strand break at the site of the removed base with both 3'- and 5'-phosphates. The sequence is that of Formamidopyrimidine-DNA glycosylase from Acidiphilium cryptum (strain JF-5).